The chain runs to 124 residues: Fluoride-specific ion channel FluC 1 (124 aa).

A run of 4 helical transmembrane segments spans residues 1 to 21 (MNWL…YVTD), 30 to 50 (AVFP…LGLL), 56 to 76 (AGVA…GALT), and 102 to 122 (IASV…AQAL). Na(+)-binding residues include Gly-73 and Thr-76.

Belongs to the fluoride channel Fluc/FEX (TC 1.A.43) family.

It is found in the cell membrane. The catalysed reaction is fluoride(in) = fluoride(out). With respect to regulation, na(+) is not transported, but it plays an essential structural role and its presence is essential for fluoride channel function. Fluoride-specific ion channel. Important for reducing fluoride concentration in the cell, thus reducing its toxicity. The chain is Fluoride-specific ion channel FluC 1 from Streptomyces avermitilis (strain ATCC 31267 / DSM 46492 / JCM 5070 / NBRC 14893 / NCIMB 12804 / NRRL 8165 / MA-4680).